Consider the following 416-residue polypeptide: Glutamyl-tRNA reductase (416 aa).

Residues 49–52 (TCNR), serine 105, 110–112 (EPQ), and glutamine 116 each bind substrate. Catalysis depends on cysteine 50, which acts as the Nucleophile. 185 to 190 (GAGETI) is a binding site for NADP(+).

The protein belongs to the glutamyl-tRNA reductase family. In terms of assembly, homodimer.

It carries out the reaction (S)-4-amino-5-oxopentanoate + tRNA(Glu) + NADP(+) = L-glutamyl-tRNA(Glu) + NADPH + H(+). It functions in the pathway porphyrin-containing compound metabolism; protoporphyrin-IX biosynthesis; 5-aminolevulinate from L-glutamyl-tRNA(Glu): step 1/2. Its function is as follows. Catalyzes the NADPH-dependent reduction of glutamyl-tRNA(Glu) to glutamate 1-semialdehyde (GSA). The protein is Glutamyl-tRNA reductase of Shewanella sediminis (strain HAW-EB3).